The following is a 116-amino-acid chain: Non-specific lipid-transfer protein (116 aa).

A signal peptide spans 1–22 (MSLKLACVVVLCMVVGAPLAQG). 3 disulfide bridges follow: Cys36–Cys52, Cys53–Cys98, and Cys73–Cys112.

Belongs to the plant LTP family.

In terms of biological role, plant non-specific lipid-transfer proteins transfer phospholipids as well as galactolipids across membranes. May play a role in wax or cutin deposition in the cell walls of expanding epidermal cells and certain secretory tissues. The chain is Non-specific lipid-transfer protein from Gossypium hirsutum (Upland cotton).